Reading from the N-terminus, the 329-residue chain is Malate dehydrogenase (329 aa).

Position 11–17 (11–17 (GAAGQIA)) interacts with NAD(+). Residues arginine 92 and arginine 98 each contribute to the substrate site. Residues asparagine 105, glutamine 112, and 129 to 131 (VGN) each bind NAD(+). Substrate-binding residues include asparagine 131 and arginine 162. The Proton acceptor role is filled by histidine 187.

This sequence belongs to the LDH/MDH superfamily. MDH type 2 family.

The enzyme catalyses (S)-malate + NAD(+) = oxaloacetate + NADH + H(+). Its function is as follows. Catalyzes the reversible oxidation of malate to oxaloacetate. The polypeptide is Malate dehydrogenase (Akkermansia muciniphila (strain ATCC BAA-835 / DSM 22959 / JCM 33894 / BCRC 81048 / CCUG 64013 / CIP 107961 / Muc)).